The primary structure comprises 274 residues: Short-chain dehydrogenase/reductase bsc3 (274 aa).

NADP(+) is bound by residues Ile-14, Tyr-170, Lys-174, Ile-203, and Thr-205. The Proton donor role is filled by Tyr-170. Catalysis depends on Lys-174, which acts as the Lowers pKa of active site Tyr.

This sequence belongs to the short-chain dehydrogenases/reductases (SDR) family.

Its pathway is mycotoxin biosynthesis. Functionally, short-chain dehydrogenase/reductase; part of the gene cluster that mediates the biosynthesis of the diterpene glucoside brassicicene C. In the first step of the brassicicene C biosynthesis, the bifunctional diterpene synthase bsc8 that possesses both prenyl transferase and terpene cyclase activity, converts isopentenyl diphosphate and dimethylallyl diphosphate into geranylgeranyl diphosphate (GGDP) that is further converted into fusicocca-2,10(14)-diene, the first precursor for brassicicene C. Fusicocca-2,10(14)-diene is then substrate of cytochrome P450 monooxygenase bsc1 for hydroxylation at the C-8 position. Oxidation at C-16 position to aldehyde is then catalyzed by the cytochrome P450 monooyxygenase bsc7, yielding fusicocca-2,10(14)-diene-8-beta,16-diol. Follows the isomerization of the double bond and reduction of aldehyde to alcohol catalyzed by the short-chain dehydrogenase/reductase bsc3 to yield the diol compound fusicocca-1,10(14)-diene-8 beta,16-diol. The next step is the oxidation at the C-3 position of fusicocca-2,10(14)-diene-8-beta,16-diol catalyzed by the alpha-ketoglutarate dependent dioxygenase bsc9, to produce a triol compound. Methylation of the hydroxy group at position 16 is performed by the methyltransferase bsc6. 16-O-methylation is followed by oxidation at the C-13 position to ketone and an alkyl shift of the methyl group leads to brassicicene C. Although the probable acetyltransferase bsc4 is included in the gene cluster, no acetylation reactions are necessary for brassicicene C biosynthesis. However, the fact that brassicicene E, which is a structurally related compound having an acetoxy group at position 12, was previously isolated from another strain of A.brassicicola suggests that the ATCC 96836 strain might also produce a small amount of brassicicene E. In Alternaria brassicicola (Dark leaf spot agent), this protein is Short-chain dehydrogenase/reductase bsc3.